The following is a 330-amino-acid chain: METVTSSDSSSAVENEHPQDTPESNNSVYTSFMKSHRCYDLIPTSSKLVVFDTSLQVKKAFFALVTNGVRAAPLWDSKKQSFVGMLTITDFINILHRYYKSALVQIYELEEHKIETWREVYLQDSFKPLVCISPNASLFDAVSSLIRNKIHRLPVIDPESGNTLYILTHKRILKFLKLFITEFPKPEFMSKSLEELQIGTYANIAMVRTTTPVYVALGIFVQHRVSALPVVDEKGRVVDIYSKFDVINLAAEKTYNNLDVSVTKALQHRSHYFEGVLKCYLHETLETIINRLVEAEVHRLVVVDENDVVKGIVSLSDILQALVLTGGEKP.

The span at 1-13 (METVTSSDSSSAV) shows a compositional bias: polar residues. The tract at residues 1 to 26 (METVTSSDSSSAVENEHPQDTPESNN) is disordered. CBS domains are found at residues 43-103 (PTSS…KSAL), 125-187 (SFKP…PKPE), and 198-260 (IGTY…NLDV). Residues Arg-70, 85–90 (MLTITD), Val-130, 151–152 (HR), and Lys-170 each bind ADP. Residues Arg-70, 85–90 (MLTITD), Val-130, His-151, 151–152 (HR), Lys-170, Thr-200, Ala-205, 226–227 (SA), and 242–245 (SKFD) each bind AMP. ATP-binding positions include Arg-70, 85 to 90 (MLTITD), Val-130, 151 to 152 (HR), Arg-152, and Lys-170. The AMPK pseudosubstrate motif lies at 138-159 (LFDAVSSLIRNKIHRLPVIDPE). ADP is bound at residue 242–245 (SKFD). 242 to 245 (SKFD) provides a ligand contact to ATP. Residue Ser-261 is modified to Phosphoserine; by ULK1. The residue at position 263 (Thr-263) is a Phosphothreonine; by ULK1. Arg-269 contacts ADP. Arg-269 serves as a coordination point for AMP. Arg-269 is an ATP binding site. The residue at position 270 (Ser-270) is a Phosphoserine; by ULK1. The 58-residue stretch at 272-329 (YFEGVLKCYLHETLETIINRLVEAEVHRLVVVDENDVVKGIVSLSDILQALVLTGGEK) folds into the CBS 4 domain. ADP contacts are provided by residues Leu-277 and 298-299 (HR). AMP is bound by residues Leu-277, His-298, 298 to 299 (HR), and 314 to 317 (SLSD). ATP contacts are provided by residues Leu-277 and 298 to 299 (HR).

It belongs to the 5'-AMP-activated protein kinase gamma subunit family. AMPK is a heterotrimer of an alpha catalytic subunit (PRKAA1 or PRKAA2), a beta (PRKAB1 or PRKAB2) and a gamma non-catalytic subunits (PRKAG1, PRKAG2 or PRKAG3). Interacts with FNIP1 and FNIP2. Post-translationally, phosphorylated by ULK1 and ULK2; leading to negatively regulate AMPK activity and suggesting the existence of a regulatory feedback loop between ULK1, ULK2 and AMPK. Glycosylated; O-GlcNAcylated by OGT, promoting the AMP-activated protein kinase (AMPK) activity.

Functionally, AMP/ATP-binding subunit of AMP-activated protein kinase (AMPK), an energy sensor protein kinase that plays a key role in regulating cellular energy metabolism. In response to reduction of intracellular ATP levels, AMPK activates energy-producing pathways and inhibits energy-consuming processes: inhibits protein, carbohydrate and lipid biosynthesis, as well as cell growth and proliferation. AMPK acts via direct phosphorylation of metabolic enzymes, and by longer-term effects via phosphorylation of transcription regulators. Also acts as a regulator of cellular polarity by remodeling the actin cytoskeleton; probably by indirectly activating myosin. Gamma non-catalytic subunit mediates binding to AMP, ADP and ATP, leading to activate or inhibit AMPK: AMP-binding results in allosteric activation of alpha catalytic subunit (PRKAA1 or PRKAA2) both by inducing phosphorylation and preventing dephosphorylation of catalytic subunits. ADP also stimulates phosphorylation, without stimulating already phosphorylated catalytic subunit. ATP promotes dephosphorylation of catalytic subunit, rendering the AMPK enzyme inactive. The sequence is that of 5'-AMP-activated protein kinase subunit gamma-1 (PRKAG1) from Sus scrofa (Pig).